The chain runs to 302 residues: Ornithine carbamoyltransferase (302 aa).

Carbamoyl phosphate is bound by residues 52–55 (STRT), glutamine 79, arginine 103, and 130–133 (HPCQ). L-ornithine is bound by residues asparagine 161, aspartate 221, and 225–226 (SM). Carbamoyl phosphate is bound by residues 261 to 262 (CL) and arginine 289.

This sequence belongs to the aspartate/ornithine carbamoyltransferase superfamily. OTCase family.

It localises to the cytoplasm. It carries out the reaction carbamoyl phosphate + L-ornithine = L-citrulline + phosphate + H(+). The protein operates within amino-acid biosynthesis; L-arginine biosynthesis; L-arginine from L-ornithine and carbamoyl phosphate: step 1/3. In terms of biological role, reversibly catalyzes the transfer of the carbamoyl group from carbamoyl phosphate (CP) to the N(epsilon) atom of ornithine (ORN) to produce L-citrulline. This is Ornithine carbamoyltransferase from Methanosarcina mazei (strain ATCC BAA-159 / DSM 3647 / Goe1 / Go1 / JCM 11833 / OCM 88) (Methanosarcina frisia).